Here is a 164-residue protein sequence, read N- to C-terminus: S-ribosylhomocysteine lyase (164 aa).

Residues histidine 54, histidine 58, and cysteine 128 each contribute to the Fe cation site.

Belongs to the LuxS family. Homodimer. It depends on Fe cation as a cofactor.

It carries out the reaction S-(5-deoxy-D-ribos-5-yl)-L-homocysteine = (S)-4,5-dihydroxypentane-2,3-dione + L-homocysteine. Functionally, involved in the synthesis of autoinducer 2 (AI-2) which is secreted by bacteria and is used to communicate both the cell density and the metabolic potential of the environment. The regulation of gene expression in response to changes in cell density is called quorum sensing. Catalyzes the transformation of S-ribosylhomocysteine (RHC) to homocysteine (HC) and 4,5-dihydroxy-2,3-pentadione (DPD). In Campylobacter jejuni subsp. jejuni serotype O:23/36 (strain 81-176), this protein is S-ribosylhomocysteine lyase.